The chain runs to 57 residues: Defensin-like protein 302 (57 aa).

3 disulfide bridges follow: C19/C39, C26/C44, and C32/C46.

It belongs to the DEFL family.

This is Defensin-like protein 302 from Arabidopsis thaliana (Mouse-ear cress).